We begin with the raw amino-acid sequence, 43 residues long: Large ribosomal subunit protein uL5 (43 aa).

The protein belongs to the universal ribosomal protein uL5 family. As to quaternary structure, part of the 50S ribosomal subunit; part of the 5S rRNA/L5/L18/L25 subcomplex. Contacts the 5S rRNA and the P site tRNA. Forms a bridge to the 30S subunit in the 70S ribosome.

This is one of the proteins that bind and probably mediate the attachment of the 5S RNA into the large ribosomal subunit, where it forms part of the central protuberance. In the 70S ribosome it contacts protein S13 of the 30S subunit (bridge B1b), connecting the 2 subunits; this bridge is implicated in subunit movement. Contacts the P site tRNA; the 5S rRNA and some of its associated proteins might help stabilize positioning of ribosome-bound tRNAs. The sequence is that of Large ribosomal subunit protein uL5 (rplE) from Proteus vulgaris.